We begin with the raw amino-acid sequence, 377 residues long: Chaperone protein DnaJ (377 aa).

Residues 5 to 70 form the J domain; sequence DYYQILGIPK…EKRSAYDQYG (66 aa). The CR-type zinc-finger motif lies at 132–210; the sequence is GIKKEIQIPT…CHGQGRVETY (79 aa). Residues Cys145, Cys148, Cys162, Cys165, Cys184, Cys187, Cys198, and Cys201 each contribute to the Zn(2+) site. 4 CXXCXGXG motif repeats span residues 145 to 152, 162 to 169, 184 to 191, and 198 to 205; these read CKTCYGSG, CSTCHGKG, CPTCHGKG, and CNLCHGQG.

Belongs to the DnaJ family. As to quaternary structure, homodimer. Requires Zn(2+) as cofactor.

The protein resides in the cytoplasm. Its function is as follows. Participates actively in the response to hyperosmotic and heat shock by preventing the aggregation of stress-denatured proteins and by disaggregating proteins, also in an autonomous, DnaK-independent fashion. Unfolded proteins bind initially to DnaJ; upon interaction with the DnaJ-bound protein, DnaK hydrolyzes its bound ATP, resulting in the formation of a stable complex. GrpE releases ADP from DnaK; ATP binding to DnaK triggers the release of the substrate protein, thus completing the reaction cycle. Several rounds of ATP-dependent interactions between DnaJ, DnaK and GrpE are required for fully efficient folding. Also involved, together with DnaK and GrpE, in the DNA replication of plasmids through activation of initiation proteins. In Buchnera aphidicola subsp. Acyrthosiphon pisum (strain Tuc7), this protein is Chaperone protein DnaJ.